We begin with the raw amino-acid sequence, 1208 residues long: Lysine-specific demethylase JMJ17 (1208 aa).

A PHD-type 1; degenerate zinc finger spans residues 1-36; that stretch reads MLLCDSCNKGWHIYCLSPPLKHIPLGNWYCLECLNT. Zn(2+)-binding residues include cysteine 4, cysteine 7, cysteine 30, and cysteine 33. The JmjC domain maps to 126 to 292; the sequence is EYCGSPWNLN…YGGSGAELYR (167 aa). Residues histidine 172, glutamate 174, and histidine 260 each contribute to the Fe cation site. Zn(2+) is bound by residues cysteine 369, cysteine 372, cysteine 383, cysteine 385, cysteine 392, histidine 395, cysteine 400, and cysteine 402. The C5HC2 zinc finger occupies 369–421; sequence CIICQQFLHLSAIVCNCRPSVFACLEHWKHLCECEPTKLRLEYRYTLAELDMM. The Nuclear localization signal motif lies at 613-620; the sequence is SKKISSAK. The PHD-type 2 zinc-finger motif lies at 1099-1145; it reads MLHCICLKPYNSRSMVSCSQCGEWYHTYCLKLHWRPKAYVCSACCPL. Zn(2+) contacts are provided by cysteine 1102, cysteine 1104, cysteine 1116, cysteine 1119, histidine 1124, cysteine 1127, cysteine 1139, and cysteine 1142.

Belongs to the JARID1 histone demethylase family. Requires Fe(2+) as cofactor. In terms of tissue distribution, expressed in inflorescences, roots, seedlings and siliques, and, at low levels, in leaves and stems.

The protein resides in the nucleus. The catalysed reaction is N(6),N(6),N(6)-trimethyl-L-lysyl(4)-[histone H3] + 2-oxoglutarate + O2 = N(6),N(6)-dimethyl-L-lysyl(4)-[histone H3] + formaldehyde + succinate + CO2. It carries out the reaction N(6),N(6)-dimethyl-L-lysyl(4)-[histone H3] + 2-oxoglutarate + O2 = N(6)-methyl-L-lysyl(4)-[histone H3] + formaldehyde + succinate + CO2. It catalyses the reaction N(6)-methyl-L-lysyl(4)-[histone H3] + 2-oxoglutarate + O2 = L-lysyl(4)-[histone H3] + formaldehyde + succinate + CO2. The enzyme catalyses N(6),N(6),N(6)-trimethyl-L-lysyl(4)-[histone H3] + 3 2-oxoglutarate + 3 O2 = L-lysyl(4)-[histone H3] + 3 formaldehyde + 3 succinate + 3 CO2. Functions as a histone H3 'Lys-4' (H3K4me) demethylase involved in the regulation of gene expression. Active on H3K4me1, H3K4me2 and H3K4me3. Repressor of the abscisic acid (ABA) signaling pathway, especially during stomatal closure regulation. Negative regulator of responses to dehydration stress by binding directly to the chromatin of SRK2E/OST1 and demethylating H3K4me3 to regulates its expression. Together with JMJ14 and JMJ16, required for plant growth and development. The chain is Lysine-specific demethylase JMJ17 from Arabidopsis thaliana (Mouse-ear cress).